A 3184-amino-acid chain; its full sequence is Probable serine/threonine-protein kinase pats1 (3184 aa).

Pro residues predominate over residues aspartate 369–serine 378. Disordered regions lie at residues aspartate 369–proline 516 and serine 913–leucine 1013. A compositionally biased stretch (low complexity) spans serine 379–asparagine 415. The segment covering aspartate 421–proline 450 has biased composition (polar residues). Over residues asparagine 451–serine 512 the composition is skewed to low complexity. One can recognise a Myotubularin phosphatase domain in the interval cysteine 842–phenylalanine 1348. Over residues serine 913–proline 934 the composition is skewed to polar residues. The span at asparagine 935–asparagine 993 shows a compositional bias: low complexity. Polar residues predominate over residues serine 1000–leucine 1013. 13 LRR repeats span residues phenylalanine 1391–tyrosine 1412, glycine 1416–valine 1438, lysine 1439–leucine 1460, serine 1467–phenylalanine 1488, serine 1491–leucine 1512, asparagine 1514–isoleucine 1535, lysine 1541–lysine 1563, serine 1564–leucine 1585, asparagine 1587–leucine 1608, asparagine 1610–leucine 1631, lysine 1633–leucine 1654, glutamine 1656–leucine 1678, and asparagine 1680–leucine 1701. The 195-residue stretch at glycine 1716–glutamine 1910 folds into the Roc domain. Residues glycine 1716–glutamine 1910 are small GTPase-like. GTP-binding positions include glycine 1729–threonine 1736, aspartate 1797–glutamine 1801, and threonine 1854–aspartate 1857. Residues proline 1918 to leucine 2127 form the COR domain. The region spanning leucine 2247–phenylalanine 2519 is the Protein kinase domain. ATP contacts are provided by residues isoleucine 2253–valine 2261 and lysine 2274. Aspartate 2379 (proton acceptor) is an active-site residue. Disordered stretches follow at residues tyrosine 2528–histidine 2609 and asparagine 2652–leucine 2671. Positions glutamine 2529 to serine 2555 are enriched in low complexity. The segment covering leucine 2556–isoleucine 2576 has biased composition (polar residues). 5 WD repeats span residues proline 2745–glutamine 2785, alanine 2790–serine 2829, alanine 2909–glutamate 2947, alanine 2949–glutamate 2986, and lysine 2990–serine 3040. A compositionally biased stretch (low complexity) spans glycine 3055–serine 3126. The tract at residues glycine 3055 to glutamine 3164 is disordered. Residues histidine 3141–proline 3157 show a composition bias toward polar residues.

Belongs to the protein kinase superfamily. TKL Ser/Thr protein kinase family. ROCO subfamily.

It carries out the reaction L-seryl-[protein] + ATP = O-phospho-L-seryl-[protein] + ADP + H(+). The catalysed reaction is L-threonyl-[protein] + ATP = O-phospho-L-threonyl-[protein] + ADP + H(+). In terms of biological role, may act as a serine/threonine-protein kinase and guanine-nucleotide releasing factor. Essential regulator of cytokinesis involved in the binding to actomyosin cytoskeleton. In Dictyostelium discoideum (Social amoeba), this protein is Probable serine/threonine-protein kinase pats1 (pats1).